The following is a 155-amino-acid chain: Nucleosome assembly protein 1-like 5 (155 aa).

Residues 1–16 are compositionally biased toward basic and acidic residues; the sequence is MADPEKQGPAESRAED. The tract at residues 1 to 60 is disordered; it reads MADPEKQGPAESRAEDEVMEGAQGGEDAATGDSATAPAAEEPQAPAENAPKPKNDFIESL. The span at 27–49 shows a compositional bias: low complexity; that stretch reads DAATGDSATAPAAEEPQAPAENA. Residues 68–94 adopt a coiled-coil conformation; that stretch reads VLALKKLQKRCDKIEAKFDKEFQALEK. Residues 119-155 form a disordered region; sequence WTLEGEDDEDDEEEEDEEEEEEEAAAGATGGPDSAEK. The span at 122-142 shows a compositional bias: acidic residues; it reads EGEDDEDDEEEEDEEEEEEEA.

This sequence belongs to the nucleosome assembly protein (NAP) family.

The protein localises to the nucleus. The chain is Nucleosome assembly protein 1-like 5 (Nap1l5) from Rattus norvegicus (Rat).